The following is a 73-amino-acid chain: DNA-directed RNA polymerase subunit omega (73 aa).

It belongs to the RNA polymerase subunit omega family. As to quaternary structure, the RNAP catalytic core consists of 2 alpha, 1 beta, 1 beta' and 1 omega subunit. When a sigma factor is associated with the core the holoenzyme is formed, which can initiate transcription.

The catalysed reaction is RNA(n) + a ribonucleoside 5'-triphosphate = RNA(n+1) + diphosphate. In terms of biological role, promotes RNA polymerase assembly. Latches the N- and C-terminal regions of the beta' subunit thereby facilitating its interaction with the beta and alpha subunits. In Maridesulfovibrio salexigens (strain ATCC 14822 / DSM 2638 / NCIMB 8403 / VKM B-1763) (Desulfovibrio salexigens), this protein is DNA-directed RNA polymerase subunit omega.